Here is a 542-residue protein sequence, read N- to C-terminus: Chaperonin GroEL 2 (542 aa).

ATP-binding positions include 30–33, Lys51, 87–91, Gly415, and Asp494; these read TLGP and DGTTT.

This sequence belongs to the chaperonin (HSP60) family. As to quaternary structure, forms a cylinder of 14 subunits composed of two heptameric rings stacked back-to-back. Interacts with the co-chaperonin GroES.

The protein resides in the cytoplasm. It carries out the reaction ATP + H2O + a folded polypeptide = ADP + phosphate + an unfolded polypeptide.. Functionally, together with its co-chaperonin GroES, plays an essential role in assisting protein folding. The GroEL-GroES system forms a nano-cage that allows encapsulation of the non-native substrate proteins and provides a physical environment optimized to promote and accelerate protein folding. The chain is Chaperonin GroEL 2 from Syntrophobacter fumaroxidans (strain DSM 10017 / MPOB).